A 380-amino-acid chain; its full sequence is Alcohol dehydrogenase 3 (380 aa).

Zn(2+) is bound by residues Cys48, Thr50, His70, Cys100, Cys103, Cys106, Cys114, and Cys178. An alcohol-binding residues include Thr50 and His70. Thr50 is a binding site for NAD(+). NAD(+) is bound by residues 203-208, Asp227, Arg232, Thr273, Val296, 296-298, Phe323, and Arg373; these read GLGAVG and VGV.

The protein belongs to the zinc-containing alcohol dehydrogenase family. As to quaternary structure, homodimer. Homotetramer. The cofactor is Zn(2+).

Its subcellular location is the cytoplasm. It carries out the reaction a primary alcohol + NAD(+) = an aldehyde + NADH + H(+). The catalysed reaction is a secondary alcohol + NAD(+) = a ketone + NADH + H(+). The polypeptide is Alcohol dehydrogenase 3 (ADH3) (Solanum tuberosum (Potato)).